Here is a 566-residue protein sequence, read N- to C-terminus: Putative ABC transporter ATP-binding protein BC_2655 (566 aa).

2 ABC transporter domains span residues 5-246 and 300-533; these read ISFE…GLRE and LKVE…ANLR. Residues 39-46 and 333-340 each bind ATP; these read GRSGSGKS and GHNGAGKS.

This sequence belongs to the ABC transporter superfamily.

Its subcellular location is the cell membrane. Probably part of an ABC transporter complex. Responsible for energy coupling to the transport system. The chain is Putative ABC transporter ATP-binding protein BC_2655 from Bacillus cereus (strain ATCC 14579 / DSM 31 / CCUG 7414 / JCM 2152 / NBRC 15305 / NCIMB 9373 / NCTC 2599 / NRRL B-3711).